An 88-amino-acid polypeptide reads, in one-letter code: Sec-independent protein translocase protein TatA (88 aa).

Residues Met-1–Gly-21 form a helical membrane-spanning segment. Positions Met-43 to Ala-88 are disordered. Positions Glu-46–Ala-57 are enriched in basic and acidic residues. Positions Gln-62–Ala-76 are enriched in polar residues. Positions Thr-77 to Ala-88 are enriched in basic and acidic residues.

It belongs to the TatA/E family. In terms of assembly, the Tat system comprises two distinct complexes: a TatABC complex, containing multiple copies of TatA, TatB and TatC subunits, and a separate TatA complex, containing only TatA subunits. Substrates initially bind to the TatABC complex, which probably triggers association of the separate TatA complex to form the active translocon.

The protein localises to the cell inner membrane. Its function is as follows. Part of the twin-arginine translocation (Tat) system that transports large folded proteins containing a characteristic twin-arginine motif in their signal peptide across membranes. TatA could form the protein-conducting channel of the Tat system. This Shewanella oneidensis (strain ATCC 700550 / JCM 31522 / CIP 106686 / LMG 19005 / NCIMB 14063 / MR-1) protein is Sec-independent protein translocase protein TatA.